The chain runs to 326 residues: Transcription factor WRKY45-1 (326 aa).

Disordered regions lie at residues Gly67–Val114 and Gly252–Asp288. Residues Val112–Pro180 constitute a DNA-binding region (WRKY). Gly residues predominate over residues Arg273–Gly283.

The protein belongs to the WRKY group III family. As to expression, expressed in aleurone cells.

It localises to the nucleus. In terms of biological role, transcriptional activator involved in defense responses against pathogens. Acts as a positive regulator of defense responses against the rice blast fungus Magnaporthe oryzae. Acts through W-boxes, which are cis-elements that are enriched in the promoters of several defense-related genes. Plays an important role in the benzothiadiazole-induced disease resistance by mediating salicylic acid (SA) defense signaling pathway, independently of the disease resistance gene NPR1/NH1. Acts as a negative regulator of defense responses against the bacterial blight Xanthomonas oryzae pv oryzae (Xoo) and the bacterial streak Xanthomonas oryzae pv oryzicola (Xoc). Acts downstream of abscisic acid (ABA) signaling in response to the rice blast fungus. ABA is a negative regulator of defense responses that interacts antagonistically with salicylic acid (SA) signaling pathway. Acts as a negative regulator of ABA signaling that suppresses growth of seedlings. Does not seem to be involved in the regulation of salt stress response. Acts as a negative regulator of cold stress response. Acts as a negative regulator of drought stress response. This is Transcription factor WRKY45-1 from Oryza sativa subsp. japonica (Rice).